The primary structure comprises 419 residues: ATP-dependent RNA helicase RhlB (419 aa).

The Q motif motif lies at 9–37 (QRFSDLALHRIVQQAIKEKGFEFCTPIQA). In terms of domain architecture, Helicase ATP-binding spans 40 to 217 (LPITLKGQDI…FEHMNDPQYV (178 aa)). Residue 53-60 (AQTGTGKT) coordinates ATP. The short motif at 163–166 (DEAD) is the DEAD box element. The Helicase C-terminal domain occupies 241–388 (KMALLMTLLE…VSQYDAKALI (148 aa)).

This sequence belongs to the DEAD box helicase family. RhlB subfamily. As to quaternary structure, component of the RNA degradosome, which is a multiprotein complex involved in RNA processing and mRNA degradation.

The protein localises to the cytoplasm. It catalyses the reaction ATP + H2O = ADP + phosphate + H(+). Functionally, DEAD-box RNA helicase involved in RNA degradation. Has RNA-dependent ATPase activity and unwinds double-stranded RNA. This Histophilus somni (strain 2336) (Haemophilus somnus) protein is ATP-dependent RNA helicase RhlB.